The following is a 238-amino-acid chain: Ribonuclease PH (238 aa).

Phosphate-binding positions include Arg86 and 124 to 126; that span reads GTR.

The protein belongs to the RNase PH family. In terms of assembly, homohexameric ring arranged as a trimer of dimers.

The enzyme catalyses tRNA(n+1) + phosphate = tRNA(n) + a ribonucleoside 5'-diphosphate. Phosphorolytic 3'-5' exoribonuclease that plays an important role in tRNA 3'-end maturation. Removes nucleotide residues following the 3'-CCA terminus of tRNAs; can also add nucleotides to the ends of RNA molecules by using nucleoside diphosphates as substrates, but this may not be physiologically important. Probably plays a role in initiation of 16S rRNA degradation (leading to ribosome degradation) during starvation. This is Ribonuclease PH from Actinobacillus succinogenes (strain ATCC 55618 / DSM 22257 / CCUG 43843 / 130Z).